The sequence spans 336 residues: Vacuolar protein sorting-associated protein 26B (336 aa).

A phosphoserine mark is found at serine 302, serine 304, and serine 319.

This sequence belongs to the VPS26 family. In terms of assembly, component of the heterotrimeric retromer cargo-selective complex (CSC), also described as vacuolar protein sorting subcomplex (VPS), formed by VPS26 (VPS26A or VPS26B), VPS29 and VPS35. The CSC has a highly elongated structure with VPS26 and VPS29 binding independently at opposite distal ends of VPS35 as central platform. The CSC is believed to associate with variable sorting nexins to form functionally distinct retromer complex variants. The originally described SNX-BAR retromer is a pentamer containing the CSC and a heterodimeric membrane-deforming subcomplex formed between SNX1 or SNX2 and SNX5 or SNX6 (also called SNX-BAR subcomplex); the respective CSC and SNX-BAR subcomplexes associate with low affinity. The CSC associates with SNX3 to form a SNX3-retromer complex. The CSC associates with SNX27, the WASH complex and the SNX-BAR subcomplex to form the SNX27-retromer complex. Interacts with VPS29, VPS35, TBC1D5, GOLPH3, SNX27. In terms of tissue distribution, ubiquitously expressed in developing embryo and adult. Highly expressed in brain.

The protein resides in the cytoplasm. Its subcellular location is the membrane. The protein localises to the early endosome. It is found in the late endosome. In terms of biological role, acts as a component of the retromer cargo-selective complex (CSC). The CSC is believed to be the core functional component of retromer or respective retromer complex variants acting to prevent missorting of selected transmembrane cargo proteins into the lysosomal degradation pathway. The recruitment of the CSC to the endosomal membrane involves RAB7A and SNX3. The SNX-BAR retromer mediates retrograde transport of cargo proteins from endosomes to the trans-Golgi network (TGN) and is involved in endosome-to-plasma membrane transport for cargo protein recycling. The SNX3-retromer mediates the retrograde transport of WLS distinct from the SNX-BAR retromer pathway. The SNX27-retromer is believed to be involved in endosome-to-plasma membrane trafficking and recycling of a broad spectrum of cargo proteins. The CSC seems to act as recruitment hub for other proteins, such as the WASH complex and TBC1D5. May be involved in retrograde transport of SORT1 but not of IGF2R. Acts redundantly with VSP26A in SNX-27 mediated endocytic recycling of SLC2A1/GLUT1. In Mus musculus (Mouse), this protein is Vacuolar protein sorting-associated protein 26B (Vps26b).